A 119-amino-acid chain; its full sequence is Single-stranded DNA-binding protein (119 aa).

An SSB domain is found at 3–102 (INIVTLVGRV…IRVDQLELLG (100 aa)).

Homotetramer.

The chain is Single-stranded DNA-binding protein (ssb1) from Anabaena variabilis.